The chain runs to 48 residues: ATP synthase protein 8 (48 aa).

The chain crosses the membrane as a helical span at residues 13–33 (LTYGFLLLIILLVLFSQFLLP).

The protein belongs to the ATPase protein 8 family. F-type ATPases have 2 components, CF(1) - the catalytic core - and CF(0) - the membrane proton channel.

It is found in the mitochondrion membrane. Mitochondrial membrane ATP synthase (F(1)F(0) ATP synthase or Complex V) produces ATP from ADP in the presence of a proton gradient across the membrane which is generated by electron transport complexes of the respiratory chain. F-type ATPases consist of two structural domains, F(1) - containing the extramembraneous catalytic core and F(0) - containing the membrane proton channel, linked together by a central stalk and a peripheral stalk. During catalysis, ATP synthesis in the catalytic domain of F(1) is coupled via a rotary mechanism of the central stalk subunits to proton translocation. Part of the complex F(0) domain. Minor subunit located with subunit a in the membrane. The chain is ATP synthase protein 8 (ATP8) from Wickerhamomyces canadensis (Yeast).